A 332-amino-acid chain; its full sequence is Glycerol-3-phosphate dehydrogenase [NAD(P)+] (332 aa).

The NADPH site is built by Ser-11, Trp-12, Arg-32, Arg-33, and Lys-106. Sn-glycerol 3-phosphate is bound by residues Lys-106 and Gly-136. Ala-140 serves as a coordination point for NADPH. The sn-glycerol 3-phosphate site is built by Lys-191, Asp-244, Ser-254, Arg-255, and Asn-256. Lys-191 acts as the Proton acceptor in catalysis. An NADPH-binding site is contributed by Arg-255. Positions 280 and 282 each coordinate NADPH.

The protein belongs to the NAD-dependent glycerol-3-phosphate dehydrogenase family.

It localises to the cytoplasm. The catalysed reaction is sn-glycerol 3-phosphate + NAD(+) = dihydroxyacetone phosphate + NADH + H(+). It carries out the reaction sn-glycerol 3-phosphate + NADP(+) = dihydroxyacetone phosphate + NADPH + H(+). The protein operates within membrane lipid metabolism; glycerophospholipid metabolism. In terms of biological role, catalyzes the reduction of the glycolytic intermediate dihydroxyacetone phosphate (DHAP) to sn-glycerol 3-phosphate (G3P), the key precursor for phospholipid synthesis. This chain is Glycerol-3-phosphate dehydrogenase [NAD(P)+], found in Corynebacterium glutamicum (strain R).